The following is a 360-amino-acid chain: Peptide chain release factor 1 (360 aa).

Position 234 is an N5-methylglutamine (Gln234). Positions Arg285–Arg305 are disordered.

This sequence belongs to the prokaryotic/mitochondrial release factor family. Post-translationally, methylated by PrmC. Methylation increases the termination efficiency of RF1.

It localises to the cytoplasm. Functionally, peptide chain release factor 1 directs the termination of translation in response to the peptide chain termination codons UAG and UAA. The protein is Peptide chain release factor 1 of Clostridium beijerinckii (strain ATCC 51743 / NCIMB 8052) (Clostridium acetobutylicum).